The sequence spans 302 residues: DNA-directed RNA polymerase II subunit rpb3 (302 aa).

Belongs to the archaeal Rpo3/eukaryotic RPB3 RNA polymerase subunit family. In terms of assembly, component of the RNA polymerase II (Pol II) complex consisting of 12 subunits.

It localises to the nucleus. DNA-dependent RNA polymerase catalyzes the transcription of DNA into RNA using the four ribonucleoside triphosphates as substrates. Component of RNA polymerase II which synthesizes mRNA precursors and many functional non-coding RNAs. Pol II is the central component of the basal RNA polymerase II transcription machinery. It is composed of mobile elements that move relative to each other. Rpb3 is part of the core element with the central large cleft and the clamp element that moves to open and close the cleft. The chain is DNA-directed RNA polymerase II subunit rpb3 (polr2c) from Dictyostelium discoideum (Social amoeba).